A 535-amino-acid polypeptide reads, in one-letter code: Sucrose transport protein SUT5 (535 aa).

At 1–53 (MEEGRRGDREGKSAAGWTALSTTKTTLEEKRRLQANGSVGGDAGTSGFRRIVR) the chain is on the cytoplasmic side. A helical transmembrane segment spans residues 54–74 (LFFACMVAGGIQYGWALQLSL). Residues 75–87 (LSPYSQTLGISHS) lie on the Extracellular side of the membrane. A helical membrane pass occupies residues 88–108 (YVSLTWICGPIAGFVVQPIVG). The Cytoplasmic portion of the chain corresponds to 109 to 122 (YYSDRCTMKMGRRR). A helical transmembrane segment spans residues 123 to 143 (PFILVGCLIICISVMIIGFSA). Topologically, residues 144–163 (DIGRHLGDTKEHCSTYTGPR) are extracellular. Residues 164–184 (WSAAMVYIVGFWFLDFANNTV) form a helical membrane-spanning segment. At 185-203 (QGPARAMMADLSAGHHGPN) the chain is on the cytoplasmic side. A helical transmembrane segment spans residues 204 to 224 (VGQSIFSLWMAIGSVLGYLSG). The Extracellular segment spans residues 225–249 (ANGKWHEWFPWLKTAACCDACANLK). The chain crosses the membrane as a helical span at residues 250–270 (GAFFTAVLLIVVSMTVTMYLA). The Cytoplasmic portion of the chain corresponds to 271 to 302 (DEMPLDKQDVDTSGGGGCAVFVDLFKSLRNLP). A helical transmembrane segment spans residues 303 to 323 (PAMFKVLAVTAVTWLSWFPFI). The Extracellular segment spans residues 324–354 (QYNTDWMGREIYHGEPQGTAAKADVYDAGVR). The helical transmembrane segment at 355–375 (EGAMGLLFCSVALGVTSFVIP) threads the bilayer. Residues 376–384 (KLCRRLTSK) lie on the Cytoplasmic side of the membrane. The chain crosses the membrane as a helical span at residues 385–405 (VVWSISNFLVFALMAVMVAVG). The Extracellular segment spans residues 406–429 (MVSMRGYRPSLAAGLTGPDPTLKA). The helical transmembrane segment at 430 to 450 (VALVVFALIGIPQAVLFSVPW) threads the bilayer. The Cytoplasmic segment spans residues 451–465 (AVASEVTAEEGGGQG). Residues 466–486 (LAIGVLNIAIVVPQLVIALTA) traverse the membrane as a helical segment. Residues 487-498 (GPIDGAFNKGNT) lie on the Extracellular side of the membrane. A helical transmembrane segment spans residues 499–519 (PAFGIGGAFAFICGVLALIWL). Residues 520–535 (PKTRGVSNAAVVAGGH) are Cytoplasmic-facing.

This sequence belongs to the glycoside-pentoside-hexuronide (GPH) cation symporter transporter (TC 2.A.2.4) family. As to quaternary structure, homodimer. Widely expressed. Highest expression in sink leaves and lowest in germinating seeds.

Its subcellular location is the cell membrane. It participates in glycan biosynthesis; sucrose metabolism. Its function is as follows. Responsible for the transport of sucrose into the cell, with the concomitant uptake of protons (symport system). Can also transport other glucosides such as maltose, arbutin, salicin, helicin, alpha-phenylglucoside and beta-phenylglucoside. This is Sucrose transport protein SUT5 (SUT5) from Oryza sativa subsp. japonica (Rice).